A 396-amino-acid polypeptide reads, in one-letter code: Lysophospholipid transporter LplT (396 aa).

Residues 1–17 (MSESVHTNTSLWSKGMK) lie on the Periplasmic side of the membrane. A helical membrane pass occupies residues 18–38 (AVIVAQFLSAFGDNALLFATL). Residues 39–52 (ALLKAQFYPEWSQP) lie on the Cytoplasmic side of the membrane. Residues 53-73 (ILQMVFVGAYILLAPFVGQVA) form a helical membrane-spanning segment. The Periplasmic segment spans residues 74-90 (DSFAKGRVMMFANGLKL). The chain crosses the membrane as a helical span at residues 91–111 (LGAASICFGINPFLGYTLVGV). At 112 to 144 (GAAAYSPAKYGILGELTTGSKLVKANGLMEASA) the chain is on the cytoplasmic side. The chain crosses the membrane as a helical span at residues 145–165 (IAAILLGSVAGGVLADWHVLV). A topological domain (periplasmic) is located at residue alanine 166. The chain crosses the membrane as a helical span at residues 167–187 (LAACALAYGGAVVANIYIPKL). Over 188 to 225 (AARPGQSWNLINMTRSFLNACTSLWCNGETRFSLVGAS) the chain is Cytoplasmic. The chain crosses the membrane as a helical span at residues 226–246 (LFWGAGVTLRFLLVLWVPVAL). Residues 247–255 (GITDNATPT) lie on the Periplasmic side of the membrane. The helical transmembrane segment at 256–276 (YLNAMVAIGIVVGAGAAAKLV) threads the bilayer. Residues 277-279 (TLE) lie on the Cytoplasmic side of the membrane. Residues 280 to 300 (TVSRCMPAGILIGVVVLIFSL) traverse the membrane as a helical segment. Topologically, residues 301 to 303 (QHE) are periplasmic. Residues 304-324 (LLPAYALLMLIGVLGGFFVVP) form a helical membrane-spanning segment. Over 325 to 342 (LNALLQERGKKSVGAGNA) the chain is Cytoplasmic. Residues 343 to 363 (IAVQNLGENSAMLLMLGIYSL) traverse the membrane as a helical segment. Residues 364–365 (AV) are Periplasmic-facing. A helical membrane pass occupies residues 366-386 (MVGIPVVPIGIGFGALFALAI). Residues 387–396 (TALWIWQRRH) lie on the Cytoplasmic side of the membrane.

The protein belongs to the major facilitator superfamily. LplT (TC 2.A.1.42) family.

The protein localises to the cell inner membrane. Functionally, catalyzes the facilitated diffusion of 2-acyl-glycero-3-phosphoethanolamine (2-acyl-GPE) into the cell. The polypeptide is Lysophospholipid transporter LplT (Shigella flexneri serotype 5b (strain 8401)).